A 144-amino-acid polypeptide reads, in one-letter code: uncharacterized protein (144 aa).

This is an uncharacterized protein from Saccharomyces cerevisiae (strain ATCC 204508 / S288c) (Baker's yeast).